Reading from the N-terminus, the 205-residue chain is Heme-binding protein 2 (205 aa).

Residues 1-39 (MAEPLQPDPGAAEDAAAQAVETPGWKAPEDAGPQPGSYE) are disordered. A2 bears the N-acetylalanine mark. The residue at position 181 (S181) is a Phosphoserine.

The protein belongs to the HEBP family. In terms of assembly, monomer. Interacts with LRPPRC. May interact with BCL2L1; an interaction with BCL2L1 was observed using a peptide, but not with the full-length protein. The full-length protein would have to undergo a major conformation change for the interaction to occur. Interacts with PDCD6. Detected in placenta.

It is found in the cytoplasm. The protein localises to the mitochondrion. Its function is as follows. Can promote mitochondrial permeability transition and facilitate necrotic cell death under different types of stress conditions. In Homo sapiens (Human), this protein is Heme-binding protein 2 (HEBP2).